The primary structure comprises 174 residues: ATP-dependent protease subunit HslV (174 aa).

Thr2 is a catalytic residue. 3 residues coordinate Na(+): Gly157, Cys160, and Thr163.

The protein belongs to the peptidase T1B family. HslV subfamily. In terms of assembly, a double ring-shaped homohexamer of HslV is capped on each side by a ring-shaped HslU homohexamer. The assembly of the HslU/HslV complex is dependent on binding of ATP.

The protein resides in the cytoplasm. It catalyses the reaction ATP-dependent cleavage of peptide bonds with broad specificity.. Allosterically activated by HslU binding. Functionally, protease subunit of a proteasome-like degradation complex believed to be a general protein degrading machinery. The chain is ATP-dependent protease subunit HslV from Shewanella halifaxensis (strain HAW-EB4).